We begin with the raw amino-acid sequence, 140 residues long: Large ribosomal subunit protein uL14 (140 aa).

The protein belongs to the universal ribosomal protein uL14 family.

This chain is Large ribosomal subunit protein uL14 (rpl-23), found in Caenorhabditis elegans.